A 34-amino-acid polypeptide reads, in one-letter code: uncharacterized protein (34 aa).

The chain crosses the membrane as a helical span at residues 10–30 (LIITSSFFAIAVVLVLSVLLI).

Its subcellular location is the membrane. This is an uncharacterized protein from Escherichia coli O157:H7.